The following is a 193-amino-acid chain: Potassium-transporting ATPase KdpC subunit (193 aa).

A helical membrane pass occupies residues 7-27 (PMIVIFAVLAALTGLAYPAVM).

The protein belongs to the KdpC family. As to quaternary structure, the system is composed of three essential subunits: KdpA, KdpB and KdpC.

It is found in the cell inner membrane. Its function is as follows. Part of the high-affinity ATP-driven potassium transport (or Kdp) system, which catalyzes the hydrolysis of ATP coupled with the electrogenic transport of potassium into the cytoplasm. This subunit acts as a catalytic chaperone that increases the ATP-binding affinity of the ATP-hydrolyzing subunit KdpB by the formation of a transient KdpB/KdpC/ATP ternary complex. The protein is Potassium-transporting ATPase KdpC subunit of Paraburkholderia phymatum (strain DSM 17167 / CIP 108236 / LMG 21445 / STM815) (Burkholderia phymatum).